Reading from the N-terminus, the 402-residue chain is Speedy protein E2B (402 aa).

The disordered stretch occupies residues 1-89; sequence MDRTETRFRK…EEPEKELAPE (89 aa). The segment covering 16–39 has biased composition (polar residues); it reads GKITTSRQPHPQNEQSPQRSTSGY. Acidic residues predominate over residues 76 to 89; it reads DESEEEPEKELAPE.

The protein belongs to the Speedy/Ringo family.

This is Speedy protein E2B (SPDYE2B) from Homo sapiens (Human).